An 891-amino-acid polypeptide reads, in one-letter code: Alanine--tRNA ligase (891 aa).

H564, H568, C681, and H685 together coordinate Zn(2+).

The protein belongs to the class-II aminoacyl-tRNA synthetase family. It depends on Zn(2+) as a cofactor.

The protein resides in the cytoplasm. The enzyme catalyses tRNA(Ala) + L-alanine + ATP = L-alanyl-tRNA(Ala) + AMP + diphosphate. Functionally, catalyzes the attachment of alanine to tRNA(Ala) in a two-step reaction: alanine is first activated by ATP to form Ala-AMP and then transferred to the acceptor end of tRNA(Ala). Also edits incorrectly charged Ser-tRNA(Ala) and Gly-tRNA(Ala) via its editing domain. The sequence is that of Alanine--tRNA ligase from Methylorubrum populi (strain ATCC BAA-705 / NCIMB 13946 / BJ001) (Methylobacterium populi).